The primary structure comprises 249 residues: Methionine aminopeptidase 2 (249 aa).

Histidine 76 lines the substrate pocket. A divalent metal cation contacts are provided by aspartate 94, aspartate 105, and histidine 168. Histidine 175 lines the substrate pocket. Glutamate 202 and glutamate 233 together coordinate a divalent metal cation.

Monomer. Co(2+) is required as a cofactor. Zn(2+) serves as cofactor. Requires Mn(2+) as cofactor. It depends on Fe(2+) as a cofactor.

It is found in the cytoplasm. It catalyses the reaction Release of N-terminal amino acids, preferentially methionine, from peptides and arylamides.. Its function is as follows. Removes the N-terminal methionine from nascent proteins. The N-terminal methionine is often cleaved when the second residue in the primary sequence is small and uncharged (Met-Ala-, Cys, Gly, Pro, Ser, Thr, or Val). Requires deformylation of the N(alpha)-formylated initiator methionine before it can be hydrolyzed. The polypeptide is Methionine aminopeptidase 2 (Bacillus subtilis (strain 168)).